Here is a 363-residue protein sequence, read N- to C-terminus: DNA replication and repair protein RecF (363 aa).

30–37 (GDNAQGKT) is a binding site for ATP.

The protein belongs to the RecF family.

It is found in the cytoplasm. The RecF protein is involved in DNA metabolism; it is required for DNA replication and normal SOS inducibility. RecF binds preferentially to single-stranded, linear DNA. It also seems to bind ATP. This is DNA replication and repair protein RecF from Lachnospira eligens (strain ATCC 27750 / DSM 3376 / VPI C15-48 / C15-B4) (Eubacterium eligens).